A 126-amino-acid polypeptide reads, in one-letter code: Holo-[acyl-carrier-protein] synthase (126 aa).

The Mg(2+) site is built by aspartate 9 and glutamate 58.

It belongs to the P-Pant transferase superfamily. AcpS family. Mg(2+) serves as cofactor.

The protein resides in the cytoplasm. It carries out the reaction apo-[ACP] + CoA = holo-[ACP] + adenosine 3',5'-bisphosphate + H(+). Functionally, transfers the 4'-phosphopantetheine moiety from coenzyme A to a Ser of acyl-carrier-protein. This Escherichia coli O17:K52:H18 (strain UMN026 / ExPEC) protein is Holo-[acyl-carrier-protein] synthase.